The primary structure comprises 213 residues: Probable nicotinate-nucleotide adenylyltransferase (213 aa).

Belongs to the NadD family.

It catalyses the reaction nicotinate beta-D-ribonucleotide + ATP + H(+) = deamido-NAD(+) + diphosphate. It participates in cofactor biosynthesis; NAD(+) biosynthesis; deamido-NAD(+) from nicotinate D-ribonucleotide: step 1/1. Its function is as follows. Catalyzes the reversible adenylation of nicotinate mononucleotide (NaMN) to nicotinic acid adenine dinucleotide (NaAD). The chain is Probable nicotinate-nucleotide adenylyltransferase from Escherichia coli O45:K1 (strain S88 / ExPEC).